The primary structure comprises 215 residues: MTTEGIFISFEGIDGAGKSTHIDALAQAFRAQGRAVTLTREPGGTPLAEKLRVLVLNDAMDAMTEALLVFAARRDHLQQLIEPALARGDVVLCDRFTDATFAYQGAGRGFDLKILSFLERTVQSIQGLEPDFIRNPDLTVWFDLAAAIAAQRLAGARSPDKFEAQPVEFFRRVSDGYLNRMTACPSRFARIEANQTREAVWQDVLHAVQARGWLT.

An ATP-binding site is contributed by 12-19; that stretch reads GIDGAGKS.

This sequence belongs to the thymidylate kinase family.

The catalysed reaction is dTMP + ATP = dTDP + ADP. Functionally, phosphorylation of dTMP to form dTDP in both de novo and salvage pathways of dTTP synthesis. The protein is Thymidylate kinase of Albidiferax ferrireducens (strain ATCC BAA-621 / DSM 15236 / T118) (Rhodoferax ferrireducens).